Reading from the N-terminus, the 97-residue chain is MTDLRHYDVIVSPAITEKSTMASENNQVVFNVARKATKPEIKAAVEALFNVKVTGVNTLVRKGKVKRFRGTVGRQSDVKKAIVTLAEGQSIDVATGL.

It belongs to the universal ribosomal protein uL23 family. In terms of assembly, part of the 50S ribosomal subunit. Contacts protein L29, and trigger factor when it is bound to the ribosome.

Functionally, one of the early assembly proteins it binds 23S rRNA. One of the proteins that surrounds the polypeptide exit tunnel on the outside of the ribosome. Forms the main docking site for trigger factor binding to the ribosome. The protein is Large ribosomal subunit protein uL23 of Chelativorans sp. (strain BNC1).